Here is a 529-residue protein sequence, read N- to C-terminus: uncharacterized protein (529 aa).

This sequence to M.jannaschii MJ1451.

This is an uncharacterized protein from Methanothermobacter thermautotrophicus (strain ATCC 29096 / DSM 1053 / JCM 10044 / NBRC 100330 / Delta H) (Methanobacterium thermoautotrophicum).